Consider the following 431-residue polypeptide: Histidinol dehydrogenase (431 aa).

Residues Y130, Q191, and N214 each coordinate NAD(+). Substrate-binding residues include S237, Q259, and H262. The Zn(2+) site is built by Q259 and H262. Active-site proton acceptor residues include E327 and H328. Substrate is bound by residues H328, D361, E415, and H420. D361 serves as a coordination point for Zn(2+). Residue H420 participates in Zn(2+) binding.

Belongs to the histidinol dehydrogenase family. The cofactor is Zn(2+).

It catalyses the reaction L-histidinol + 2 NAD(+) + H2O = L-histidine + 2 NADH + 3 H(+). Its pathway is amino-acid biosynthesis; L-histidine biosynthesis; L-histidine from 5-phospho-alpha-D-ribose 1-diphosphate: step 9/9. Its function is as follows. Catalyzes the sequential NAD-dependent oxidations of L-histidinol to L-histidinaldehyde and then to L-histidine. The polypeptide is Histidinol dehydrogenase (Syntrophotalea carbinolica (strain DSM 2380 / NBRC 103641 / GraBd1) (Pelobacter carbinolicus)).